The following is a 35-amino-acid chain: Photosystem II reaction center protein T (35 aa).

Residues 3 to 23 (ALVYTFLLVSTLGIIFFAIFF) form a helical membrane-spanning segment.

Belongs to the PsbT family. As to quaternary structure, PSII is composed of 1 copy each of membrane proteins PsbA, PsbB, PsbC, PsbD, PsbE, PsbF, PsbH, PsbI, PsbJ, PsbK, PsbL, PsbM, PsbT, PsbY, PsbZ, Psb30/Ycf12, at least 3 peripheral proteins of the oxygen-evolving complex and a large number of cofactors. It forms dimeric complexes.

The protein resides in the plastid. It localises to the chloroplast thylakoid membrane. Found at the monomer-monomer interface of the photosystem II (PS II) dimer, plays a role in assembly and dimerization of PSII. PSII is a light-driven water plastoquinone oxidoreductase, using light energy to abstract electrons from H(2)O, generating a proton gradient subsequently used for ATP formation. This Metasequoia glyptostroboides (Dawn redwood) protein is Photosystem II reaction center protein T.